Reading from the N-terminus, the 510-residue chain is NAD(P)H-quinone oxidoreductase subunit 2 A, chloroplastic (510 aa).

13 helical membrane passes run 24–44, 57–77, 99–119, 124–144, 149–169, 183–203, 227–247, 295–315, 323–343, 354–374, 395–415, 418–438, and 482–502; these read LLLFDGSFIFPECILIFGLIL, MPWLYFISSTSLVMSITALLF, IFQFLILLCSTLCIPLSVEYI, MAITEFLLFVLTATLGGMFLC, LITIFVAPECFSLCSYLLSGY, YLLMGGASSSILVHGFSWLYG, PGISIALIFITVGIGFKLSPA, WHLLLEILAILSMIVGNLIAI, MLAYSSIGQIGYVIIGIIVGD, YMLFYISMNLGTFACIVLFGL, ALSLALCLLSLGGLPPLAGFF, LHLFWCGWQAGLYFLVSIGLL, and LSMIVCVIASTIPGISMSPII.

Belongs to the complex I subunit 2 family. In terms of assembly, NDH is composed of at least 16 different subunits, 5 of which are encoded in the nucleus.

It is found in the plastid. It localises to the chloroplast thylakoid membrane. It catalyses the reaction a plastoquinone + NADH + (n+1) H(+)(in) = a plastoquinol + NAD(+) + n H(+)(out). The catalysed reaction is a plastoquinone + NADPH + (n+1) H(+)(in) = a plastoquinol + NADP(+) + n H(+)(out). Its function is as follows. NDH shuttles electrons from NAD(P)H:plastoquinone, via FMN and iron-sulfur (Fe-S) centers, to quinones in the photosynthetic chain and possibly in a chloroplast respiratory chain. The immediate electron acceptor for the enzyme in this species is believed to be plastoquinone. Couples the redox reaction to proton translocation, and thus conserves the redox energy in a proton gradient. The polypeptide is NAD(P)H-quinone oxidoreductase subunit 2 A, chloroplastic (Populus trichocarpa (Western balsam poplar)).